The chain runs to 374 residues: MRSNLAPYAVSDTNSRGRRIHEELPAGRSQFQRDRDRVIHSTAFRRLEYKTQVFVNHEGDLFRTRLTHSLEVAQIGRSIARNLNLNEELVEAITLSHDLGHTPFGHAGQDALNDCMKTYGGFEHNLQSLRVVDVLEERYATFNGLNLCFETREGILKRVPKSKAAALDELGTRFLHGHSASLEAQLANLADEIAYNNHDVDDGLRSGLITLAQLEEIEIFARHLHQVKQHYPDITGRRLIHETVRGMINTLVVDLTVQSGTRIRDASPDSPDSVREKPVLIGFSDTIKRQQQELKRFLHKNLYKHYQVMRMSNKARHTIEKLFTTFETEPALLPYEYQQKFQEYGHQAIADYIAGMTDRYAIREYQRLFAITEN.

The HD domain occupies 65–196 (RLTHSLEVAQ…ANLADEIAYN (132 aa)).

The protein belongs to the dGTPase family. Type 2 subfamily.

The protein is Deoxyguanosinetriphosphate triphosphohydrolase-like protein (dgt) of Nitrosomonas europaea (strain ATCC 19718 / CIP 103999 / KCTC 2705 / NBRC 14298).